Here is a 417-residue protein sequence, read N- to C-terminus: Proteasome-activating nucleotidase (417 aa).

Positions 24–78 (SKYLLDRVKQLEERNVRLKEEYRKIELEKKSVENKKVQYEREIRKLTSELDRLKT) form a coiled coil. ATP-binding positions include 203–208 (GTGKTL) and histidine 342. Positions 415–417 (MFA) are docks into pockets in the proteasome alpha-ring to cause gate opening.

Belongs to the AAA ATPase family. As to quaternary structure, homohexamer. The hexameric complex has a two-ring architecture resembling a top hat that caps the 20S proteasome core at one or both ends. Upon ATP-binding, the C-terminus of PAN interacts with the alpha-rings of the proteasome core by binding to the intersubunit pockets.

It is found in the cytoplasm. Functionally, ATPase which is responsible for recognizing, binding, unfolding and translocation of substrate proteins into the archaeal 20S proteasome core particle. Is essential for opening the gate of the 20S proteasome via an interaction with its C-terminus, thereby allowing substrate entry and access to the site of proteolysis. Thus, the C-termini of the proteasomal ATPase function like a 'key in a lock' to induce gate opening and therefore regulate proteolysis. Unfolding activity requires energy from ATP hydrolysis, whereas ATP binding alone promotes ATPase-20S proteasome association which triggers gate opening, and supports translocation of unfolded substrates. The protein is Proteasome-activating nucleotidase of Methanocella arvoryzae (strain DSM 22066 / NBRC 105507 / MRE50).